The chain runs to 355 residues: UDP-N-acetylglucosamine--N-acetylmuramyl-(pentapeptide) pyrophosphoryl-undecaprenol N-acetylglucosamine transferase (355 aa).

UDP-N-acetyl-alpha-D-glucosamine-binding positions include 15–17, asparagine 127, arginine 163, serine 191, isoleucine 244, 263–268, and glutamine 288; these read TGG and ALTVSE.

It belongs to the glycosyltransferase 28 family. MurG subfamily.

It localises to the cell inner membrane. It carries out the reaction di-trans,octa-cis-undecaprenyl diphospho-N-acetyl-alpha-D-muramoyl-L-alanyl-D-glutamyl-meso-2,6-diaminopimeloyl-D-alanyl-D-alanine + UDP-N-acetyl-alpha-D-glucosamine = di-trans,octa-cis-undecaprenyl diphospho-[N-acetyl-alpha-D-glucosaminyl-(1-&gt;4)]-N-acetyl-alpha-D-muramoyl-L-alanyl-D-glutamyl-meso-2,6-diaminopimeloyl-D-alanyl-D-alanine + UDP + H(+). It participates in cell wall biogenesis; peptidoglycan biosynthesis. Functionally, cell wall formation. Catalyzes the transfer of a GlcNAc subunit on undecaprenyl-pyrophosphoryl-MurNAc-pentapeptide (lipid intermediate I) to form undecaprenyl-pyrophosphoryl-MurNAc-(pentapeptide)GlcNAc (lipid intermediate II). The chain is UDP-N-acetylglucosamine--N-acetylmuramyl-(pentapeptide) pyrophosphoryl-undecaprenol N-acetylglucosamine transferase from Salmonella paratyphi B (strain ATCC BAA-1250 / SPB7).